We begin with the raw amino-acid sequence, 271 residues long: Cobalt import ATP-binding protein CbiO (271 aa).

Residues 2–236 enclose the ABC transporter domain; sequence LATSDLWFRY…TEAMEHAGLT (235 aa). An ATP-binding site is contributed by 34–41; that stretch reads GANGCGKS.

This sequence belongs to the ABC transporter superfamily. Cobalt importer (TC 3.A.1.18.1) family. In terms of assembly, forms an energy-coupling factor (ECF) transporter complex composed of an ATP-binding protein (A component, CbiO), a transmembrane protein (T component, CbiQ) and 2 possible substrate-capture proteins (S components, CbiM and CbiN) of unknown stoichimetry. Expression of just CbiMN in E.coli confers some cobalt uptake.

It localises to the cell inner membrane. The protein operates within cofactor biosynthesis; adenosylcobalamin biosynthesis. Part of the energy-coupling factor (ECF) transporter complex CbiMNOQ involved in cobalt import. The complex confers cobalt uptake upon expression in E.coli; can also transport nickel with a very low affinity. Presumably responsible for energy coupling to the transport system. This is Cobalt import ATP-binding protein CbiO from Salmonella typhimurium (strain LT2 / SGSC1412 / ATCC 700720).